The sequence spans 329 residues: Src kinase-associated phosphoprotein 2 (329 aa).

The segment at 58-95 (YAEDSEEEEDWDSNEGGSLQSERTDKDEEACEGAQQAP) is disordered. Acidic residues predominate over residues 61-70 (DSEEEEDWDS). A PH domain is found at 104–207 (SVFKAGYLEK…WVKQIDFVLK (104 aa)). Positions 240-263 (EDMPSPPPKVEPVSKHPPPTPAVD) are disordered. Residues 243-260 (PSPPPKVEPVSKHPPPTP) show a composition bias toward pro residues. The 62-residue stretch at 267 to 328 (DYANYYQGLW…PKDYLMELYA (62 aa)) folds into the SH3 domain.

It belongs to the SKAP family. In terms of processing, phosphorylated on tyrosines.

Its subcellular location is the cytoplasm. Its function is as follows. May be involved in B-cell and macrophage adhesion processes. May play a role in src signaling pathway. This Takifugu rubripes (Japanese pufferfish) protein is Src kinase-associated phosphoprotein 2 (skap2).